We begin with the raw amino-acid sequence, 341 residues long: Sphingolipid long chain base-responsive protein LSP1 (341 aa).

Over residues 1-11 (MHRTYSLRNQR) the composition is skewed to polar residues. The segment at 1–32 (MHRTYSLRNQRAPTAAELQAPPPPPSSTKSKF) is disordered. Thr233 carries the post-translational modification Phosphothreonine. Acidic residues-rich tracts occupy residues 282–294 (YEDEDGEEEEEPE) and 305–323 (VEEEEVEWTTEVPVDDEAH). Residues 282-341 (YEDEDGEEEEEPEIQNGDIPGQVVEEEEVEWTTEVPVDDEAHEADHHVSQNGHTSGSENI) form a disordered region. Positions 330–341 (SQNGHTSGSENI) are enriched in polar residues.

Phosphorylated by PKH1 and PKH2. Phosphorylation is stimulated by sphingolipid long chain bases (LCBs). In terms of processing, N-glycosylated.

The protein localises to the cytoplasm. It is found in the cell cortex. Together with PIL1, main component of eisosomes, structures at the cell periphery underneath the plasma membrane that mark the site of endocytosis. Negative regulator of cell wall integrity (CWI) in unstressed cells, probably by inhibiting protein kinase PKH1/PHK2 activity and regulating their downstream CWI pathways PKC1-MAP kinase pathway and protein kinase YPK1 pathway. Activity may be regulated by the transient increase of sphingolipid long chain bases (LCBs) during heat stress. This chain is Sphingolipid long chain base-responsive protein LSP1 (LSP1), found in Saccharomyces cerevisiae (strain ATCC 204508 / S288c) (Baker's yeast).